The following is a 522-amino-acid chain: ATP synthase subunit alpha 2 (522 aa).

176–183 (GDRQTGKT) lines the ATP pocket.

Belongs to the ATPase alpha/beta chains family. F-type ATPases have 2 components, CF(1) - the catalytic core - and CF(0) - the membrane proton channel. CF(1) has five subunits: alpha(3), beta(3), gamma(1), delta(1), epsilon(1). CF(0) has three main subunits: a(1), b(2) and c(9-12). The alpha and beta chains form an alternating ring which encloses part of the gamma chain. CF(1) is attached to CF(0) by a central stalk formed by the gamma and epsilon chains, while a peripheral stalk is formed by the delta and b chains.

The protein localises to the cell inner membrane. It catalyses the reaction ATP + H2O + 4 H(+)(in) = ADP + phosphate + 5 H(+)(out). In terms of biological role, produces ATP from ADP in the presence of a proton gradient across the membrane. The alpha chain is a regulatory subunit. This chain is ATP synthase subunit alpha 2, found in Syntrophotalea carbinolica (strain DSM 2380 / NBRC 103641 / GraBd1) (Pelobacter carbinolicus).